An 853-amino-acid chain; its full sequence is DNA mismatch repair protein MutS (853 aa).

614–621 (GPNMGGKS) contributes to the ATP binding site.

It belongs to the DNA mismatch repair MutS family.

In terms of biological role, this protein is involved in the repair of mismatches in DNA. It is possible that it carries out the mismatch recognition step. This protein has a weak ATPase activity. The sequence is that of DNA mismatch repair protein MutS from Escherichia coli O81 (strain ED1a).